Consider the following 702-residue polypeptide: Soluble guanylate cyclase gcy-31 (702 aa).

Heme is bound at residue His104. A coiled-coil region spans residues 368-406 (TQQSAELKLLLHQEAQKSRNMRENMNRLKKERRRTDKLL). One can recognise a Guanylate cyclase domain in the interval 435-564 (TILFTDIVEF…ETVYVANKME (130 aa)). Residues Asp440 and Asp484 each contribute to the Mg(2+) site. A disordered region spans residues 614-702 (RHGPHRVPSP…QDLTPRKSIT (89 aa)). The segment covering 633-643 (SQTEDDDDDEL) has biased composition (acidic residues). A compositionally biased stretch (polar residues) spans 683 to 695 (RNSNKTPRQSQDL).

The protein belongs to the adenylyl cyclase class-4/guanylyl cyclase family. Heterodimer; with other soluble guanylate cyclases. Requires heme as cofactor. In terms of tissue distribution, expressed in a pair of bilaterally symmetric neurons in the head.

The protein resides in the cytoplasm. It carries out the reaction GTP = 3',5'-cyclic GMP + diphosphate. With respect to regulation, may be regulated by molecular oxygen. Probably not activated by nitric oxide (NO). In terms of biological role, synthesizes cyclic GMP (cGMP) from GTP. May play a role in embryogenesis. The protein is Soluble guanylate cyclase gcy-31 (gcy-31) of Caenorhabditis elegans.